Here is a 396-residue protein sequence, read N- to C-terminus: Ribosomal RNA large subunit methyltransferase I (396 aa).

In terms of domain architecture, PUA spans 2–79; sequence AVRIKLKPGR…REEEIDREFF (78 aa).

This sequence belongs to the methyltransferase superfamily. RlmI family.

It localises to the cytoplasm. The catalysed reaction is cytidine(1962) in 23S rRNA + S-adenosyl-L-methionine = 5-methylcytidine(1962) in 23S rRNA + S-adenosyl-L-homocysteine + H(+). Its function is as follows. Specifically methylates the cytosine at position 1962 (m5C1962) of 23S rRNA. The chain is Ribosomal RNA large subunit methyltransferase I from Shewanella sp. (strain ANA-3).